A 252-amino-acid polypeptide reads, in one-letter code: RNA-binding protein 2 (252 aa).

Disordered regions lie at residues 1-34 (MADG…PSGV) and 232-252 (RLQF…RGKR). One can recognise an RRM domain in the interval 152 to 238 (STLYVEGLPS…SYLRLQFSRS (87 aa)). Residues 242–252 (RSGGPGPRGKR) are compositionally biased toward gly residues.

In terms of biological role, probable RNA-binding protein. The protein is RNA-binding protein 2 of Medicago truncatula (Barrel medic).